Reading from the N-terminus, the 314-residue chain is Putative S-adenosyl-L-methionine-dependent methyltransferase MMAR_5323 (314 aa).

Residues D132 and 161–162 contribute to the S-adenosyl-L-methionine site; that span reads DL.

This sequence belongs to the UPF0677 family.

In terms of biological role, exhibits S-adenosyl-L-methionine-dependent methyltransferase activity. The protein is Putative S-adenosyl-L-methionine-dependent methyltransferase MMAR_5323 of Mycobacterium marinum (strain ATCC BAA-535 / M).